A 419-amino-acid polypeptide reads, in one-letter code: UDP-N-acetylglucosamine 1-carboxyvinyltransferase (419 aa).

22–23 is a phosphoenolpyruvate binding site; sequence KN. R92 contributes to the UDP-N-acetyl-alpha-D-glucosamine binding site. C116 functions as the Proton donor in the catalytic mechanism. The residue at position 116 (C116) is a 2-(S-cysteinyl)pyruvic acid O-phosphothioketal. UDP-N-acetyl-alpha-D-glucosamine-binding positions include 121 to 125, D307, and L329; that span reads RPIDL.

The protein belongs to the EPSP synthase family. MurA subfamily.

The protein localises to the cytoplasm. It carries out the reaction phosphoenolpyruvate + UDP-N-acetyl-alpha-D-glucosamine = UDP-N-acetyl-3-O-(1-carboxyvinyl)-alpha-D-glucosamine + phosphate. The protein operates within cell wall biogenesis; peptidoglycan biosynthesis. Its function is as follows. Cell wall formation. Adds enolpyruvyl to UDP-N-acetylglucosamine. The chain is UDP-N-acetylglucosamine 1-carboxyvinyltransferase from Campylobacter fetus subsp. fetus (strain 82-40).